The following is a 370-amino-acid chain: UDP-N-acetylglucosamine--N-acetylmuramyl-(pentapeptide) pyrophosphoryl-undecaprenol N-acetylglucosamine transferase (370 aa).

UDP-N-acetyl-alpha-D-glucosamine-binding positions include 10-12, Asn-126, Ser-200, Ile-255, and Gln-300; that span reads TGG.

It belongs to the glycosyltransferase 28 family. MurG subfamily.

The protein resides in the cell membrane. The catalysed reaction is Mur2Ac(oyl-L-Ala-gamma-D-Glu-L-Lys-D-Ala-D-Ala)-di-trans,octa-cis-undecaprenyl diphosphate + UDP-N-acetyl-alpha-D-glucosamine = beta-D-GlcNAc-(1-&gt;4)-Mur2Ac(oyl-L-Ala-gamma-D-Glu-L-Lys-D-Ala-D-Ala)-di-trans,octa-cis-undecaprenyl diphosphate + UDP + H(+). It functions in the pathway cell wall biogenesis; peptidoglycan biosynthesis. In terms of biological role, cell wall formation. Catalyzes the transfer of a GlcNAc subunit on undecaprenyl-pyrophosphoryl-MurNAc-pentapeptide (lipid intermediate I) to form undecaprenyl-pyrophosphoryl-MurNAc-(pentapeptide)GlcNAc (lipid intermediate II). The sequence is that of UDP-N-acetylglucosamine--N-acetylmuramyl-(pentapeptide) pyrophosphoryl-undecaprenol N-acetylglucosamine transferase from Lactobacillus gasseri (strain ATCC 33323 / DSM 20243 / BCRC 14619 / CIP 102991 / JCM 1131 / KCTC 3163 / NCIMB 11718 / NCTC 13722 / AM63).